The chain runs to 172 residues: L-amino acid N-acyltransferase MnaT (172 aa).

The 163-residue stretch at 1–163 (MSIRFARKAD…DLTFMQLQLD (163 aa)) folds into the N-acetyltransferase domain. Acetyl-CoA-binding positions include 85–87 (VYV), 93–98 (GKGLGR), Asn124, and Ser133.

This sequence belongs to the acetyltransferase family. PAT/BAR subfamily.

The enzyme catalyses L-methionine + acetyl-CoA = N-acetyl-L-methionine + CoA + H(+). The catalysed reaction is propanoyl-CoA + L-methionine = N-propanoyl-L-methioninate + CoA + H(+). It carries out the reaction L-alpha-phenylglycine + acetyl-CoA = N-acetyl-L-alpha-phenylglycine + CoA + H(+). It catalyses the reaction L-methionine sulfoximine + acetyl-CoA = N-acetyl-L-methionine sulfoximine + CoA + H(+). The enzyme catalyses L-methionine sulfone + acetyl-CoA = N-acetyl-L-methionine sulfone + CoA + H(+). Functionally, acyltransferase that appears to be required for E.coli optimal growth rate and yield via the formation of N-acetylated amino acids. Catalyzes the acylation of L-methionine using acetyl-CoA or propanoyl-CoA as acyl donors, and the acetylation of L-phenylglycine. Is also able to N-acylate other free L-amino acids and their derivatives using a CoA thioester as cosubstrate. Using acetyl-CoA as an acyl donor, substrate specificity is methionine sulfone &gt; methionine sulfoximine &gt; methionine sulfoxide &gt; methionine. Asparagine, lysine, glutamine, aspartate and glutamate are very poor substrates. Using methionine as a substrate, acyl donor preference is propanoyl-CoA &gt; acetyl-CoA &gt;&gt; butyryl-CoA. Likely plays a role in the resistance against the toxic effects of L-methionine sulfoximine (MSX), via its ability to catalyze its acetylation; MSX is a rare amino acid which inhibits glutamine synthetase (GlnA). In Escherichia coli (strain K12), this protein is L-amino acid N-acyltransferase MnaT.